A 331-amino-acid polypeptide reads, in one-letter code: Phenylalanine--tRNA ligase alpha subunit (331 aa).

Position 252 (glutamate 252) interacts with Mg(2+).

This sequence belongs to the class-II aminoacyl-tRNA synthetase family. Phe-tRNA synthetase alpha subunit type 1 subfamily. Tetramer of two alpha and two beta subunits. The cofactor is Mg(2+).

The protein localises to the cytoplasm. The catalysed reaction is tRNA(Phe) + L-phenylalanine + ATP = L-phenylalanyl-tRNA(Phe) + AMP + diphosphate + H(+). This Marinomonas sp. (strain MWYL1) protein is Phenylalanine--tRNA ligase alpha subunit.